The primary structure comprises 154 residues: Large ribosomal subunit protein uL13 (154 aa).

It belongs to the universal ribosomal protein uL13 family. Part of the 50S ribosomal subunit.

Functionally, this protein is one of the early assembly proteins of the 50S ribosomal subunit, although it is not seen to bind rRNA by itself. It is important during the early stages of 50S assembly. The chain is Large ribosomal subunit protein uL13 from Rhodopseudomonas palustris (strain BisB18).